We begin with the raw amino-acid sequence, 338 residues long: S-adenosylmethionine:tRNA ribosyltransferase-isomerase (338 aa).

This sequence belongs to the QueA family. As to quaternary structure, monomer.

It localises to the cytoplasm. It carries out the reaction 7-aminomethyl-7-carbaguanosine(34) in tRNA + S-adenosyl-L-methionine = epoxyqueuosine(34) in tRNA + adenine + L-methionine + 2 H(+). Its pathway is tRNA modification; tRNA-queuosine biosynthesis. Transfers and isomerizes the ribose moiety from AdoMet to the 7-aminomethyl group of 7-deazaguanine (preQ1-tRNA) to give epoxyqueuosine (oQ-tRNA). In Francisella tularensis subsp. holarctica (strain FTNF002-00 / FTA), this protein is S-adenosylmethionine:tRNA ribosyltransferase-isomerase.